A 319-amino-acid polypeptide reads, in one-letter code: MIFYTLEHILTHISFSLVSIGITIFLITLSVDEIIGLYDSSEKGVIGTFLCITGLLVTRWAYSGHFPLSNLYESLLFLSWSFAIIHMFPYFKKQNSYVRTITSSSTIFTQGLVTSGLLSEMQQSEILVPALQSQWLMMHVSMMVLGYAALLCGSLLSVALLVITFRKALRIFSKKKAFLKDSFSFVEIQYRNEPSNVLLSTSFISSKNYYRAQLIQQLDRWSSRIISLGFIFLTIGILSGAVWANEAWGSYWNWDPKETWAFITWTMFAIYLHTRTNPNFQSVNSAIVAFLGFIIIWICYFGVNLLGIGLHSYGSFNLH.

The next 7 membrane-spanning stretches (helical) occupy residues 9 to 29 (ILTH…LITL), 44 to 64 (GVIG…AYSG), 71 to 91 (LYES…FPYF), 143 to 163 (MVLG…LLVI), 225 to 245 (IISL…VWAN), 259 to 273 (TWAF…IYLH), and 286 to 306 (AIVA…VNLL).

This sequence belongs to the CcmF/CycK/Ccl1/NrfE/CcsA family. In terms of assembly, may interact with Ccs1.

The protein resides in the plastid. The protein localises to the chloroplast thylakoid membrane. Functionally, required during biogenesis of c-type cytochromes (cytochrome c6 and cytochrome f) at the step of heme attachment. The protein is Cytochrome c biogenesis protein CcsA of Oenothera glazioviana (Large-flowered evening primrose).